Here is a 101-residue protein sequence, read N- to C-terminus: Small ribosomal subunit protein uS14 (101 aa).

This sequence belongs to the universal ribosomal protein uS14 family. Part of the 30S ribosomal subunit. Contacts proteins S3 and S10.

Its function is as follows. Binds 16S rRNA, required for the assembly of 30S particles and may also be responsible for determining the conformation of the 16S rRNA at the A site. This is Small ribosomal subunit protein uS14 from Nitrosospira multiformis (strain ATCC 25196 / NCIMB 11849 / C 71).